The primary structure comprises 158 residues: Biotin carboxyl carrier protein of acetyl-CoA carboxylase (158 aa).

Positions 81–157 constitute a Biotinyl-binding domain; it reads YATIVSPMVG…DCGQALMKVE (77 aa). Lys123 is modified (N6-biotinyllysine).

It is found in the plastid. The protein localises to the chloroplast. Its pathway is lipid metabolism; fatty acid biosynthesis. In terms of biological role, this protein is a component of the acetyl coenzyme A carboxylase complex; first, biotin carboxylase catalyzes the carboxylation of the carrier protein and then the transcarboxylase transfers the carboxyl group to form malonyl-CoA. The protein is Biotin carboxyl carrier protein of acetyl-CoA carboxylase (accB) of Pyropia yezoensis (Susabi-nori).